Consider the following 157-residue polypeptide: 2-C-methyl-D-erythritol 2,4-cyclodiphosphate synthase (157 aa).

A divalent metal cation is bound by residues D8 and H10. 4-CDP-2-C-methyl-D-erythritol 2-phosphate is bound by residues 8-10 (DVH) and 34-35 (HS). Position 42 (H42) interacts with a divalent metal cation. Residues 56 to 58 (DIG), 61 to 65 (FPDTD), 100 to 106 (AQAPKMA), 132 to 135 (TTTE), F139, and R142 each bind 4-CDP-2-C-methyl-D-erythritol 2-phosphate.

It belongs to the IspF family. Homotrimer. The cofactor is a divalent metal cation.

The catalysed reaction is 4-CDP-2-C-methyl-D-erythritol 2-phosphate = 2-C-methyl-D-erythritol 2,4-cyclic diphosphate + CMP. Its pathway is isoprenoid biosynthesis; isopentenyl diphosphate biosynthesis via DXP pathway; isopentenyl diphosphate from 1-deoxy-D-xylulose 5-phosphate: step 4/6. Involved in the biosynthesis of isopentenyl diphosphate (IPP) and dimethylallyl diphosphate (DMAPP), two major building blocks of isoprenoid compounds. Catalyzes the conversion of 4-diphosphocytidyl-2-C-methyl-D-erythritol 2-phosphate (CDP-ME2P) to 2-C-methyl-D-erythritol 2,4-cyclodiphosphate (ME-CPP) with a corresponding release of cytidine 5-monophosphate (CMP). The sequence is that of 2-C-methyl-D-erythritol 2,4-cyclodiphosphate synthase from Pseudomonas putida (strain ATCC 700007 / DSM 6899 / JCM 31910 / BCRC 17059 / LMG 24140 / F1).